Consider the following 200-residue polypeptide: Putative protein ATXN8OS (200 aa).

Residues 19–39 (PFSGLKEEEEEDGEDDEEEEE) form a disordered region. The segment covering 25–39 (EEEEEDGEDDEEEEE) has biased composition (acidic residues).

As to expression, expressed in brain. Expressed in muscle tissues (at protein level).

The protein localises to the cytoplasm. The polypeptide is Putative protein ATXN8OS (Homo sapiens (Human)).